We begin with the raw amino-acid sequence, 225 residues long: Uracil-DNA glycosylase (225 aa).

The active-site Proton acceptor is the aspartate 65.

It belongs to the uracil-DNA glycosylase (UDG) superfamily. UNG family.

The protein localises to the cytoplasm. The catalysed reaction is Hydrolyzes single-stranded DNA or mismatched double-stranded DNA and polynucleotides, releasing free uracil.. Functionally, excises uracil residues from the DNA which can arise as a result of misincorporation of dUMP residues by DNA polymerase or due to deamination of cytosine. The protein is Uracil-DNA glycosylase of Bacillus thuringiensis (strain Al Hakam).